The sequence spans 337 residues: Hsp90 co-chaperone Cdc37-like 1 (337 aa).

Residues 1–11 are compositionally biased toward pro residues; that stretch reads MEQPWPPPGPW. Residues 1–40 are disordered; sequence MEQPWPPPGPWSLPRAEGEAEEESDFDVFPSSPRCPQLPG. The interval 2–171 is self-association; sequence EQPWPPPGPW…YEQKIRHFGM (170 aa). 2 positions are modified to phosphoserine: Ser-32 and Ser-88. Residues 84-122 adopt a coiled-coil conformation; the sequence is HNSESLDQEHAKAQTAVSELRQREEEWRQKEEALVQREK. The self-association and interaction with Hsp90 stretch occupies residues 147–277; that stretch reads KDTEDEDKSE…SRVRLYSQSQ (131 aa). The interaction with Hsp70 stretch occupies residues 267–337; it reads KSRVRLYSQS…DDEPKMMDTV (71 aa). The required for interaction with STIP1 stretch occupies residues 278–337; that stretch reads SFQPMTVQNHVPHSGVGSIGLLESLPQNPDYLQYSISTALCSLNSVVHKEDDEPKMMDTV.

It belongs to the CDC37 family. As to quaternary structure, self-associates. Forms complexes with Hsp70 and Hsp90. Interacts with CDC37, FKBP4, PPID and STIP1. Expressed in brain, heart, kidney, liver, placenta and skeletal muscle.

Its subcellular location is the cytoplasm. Functionally, co-chaperone that binds to numerous proteins and promotes their interaction with Hsp70 and Hsp90. In Homo sapiens (Human), this protein is Hsp90 co-chaperone Cdc37-like 1 (CDC37L1).